Reading from the N-terminus, the 330-residue chain is DNA-directed RNA polymerase subunit alpha (330 aa).

The alpha N-terminal domain (alpha-NTD) stretch occupies residues 1-237 (MYTEINEMLT…RQLHAFVDMK (237 aa)). The alpha C-terminal domain (alpha-CTD) stretch occupies residues 251–330 (FDPVLLRSVD…ENWPPASLGE (80 aa)).

It belongs to the RNA polymerase alpha chain family. Homodimer. The RNAP catalytic core consists of 2 alpha, 1 beta, 1 beta' and 1 omega subunit. When a sigma factor is associated with the core the holoenzyme is formed, which can initiate transcription.

It catalyses the reaction RNA(n) + a ribonucleoside 5'-triphosphate = RNA(n+1) + diphosphate. Its function is as follows. DNA-dependent RNA polymerase catalyzes the transcription of DNA into RNA using the four ribonucleoside triphosphates as substrates. In Legionella pneumophila subsp. pneumophila (strain Philadelphia 1 / ATCC 33152 / DSM 7513), this protein is DNA-directed RNA polymerase subunit alpha.